A 217-amino-acid chain; its full sequence is MAAGSRTSLLLAFGLLCLPWLQEGSAFPTIPLSRLFDNAMLRAHRLYQLAYDTYQEFEEAYILKEQKYSFLQNPQTSLCFSESIPTPSNRVKTQQKSNLELLRISLLLIQSWLEPVQLLRSVFANSLVYGASDSNVYRHLKDLEEGIQTLMWRLEDGSPRTGQIFNQSYSKFDTKSHNDDALLKNYGLLYCFRKDMDKVETFLRIVQCRSVEGSCGF.

The first 26 residues, 1-26, serve as a signal peptide directing secretion; that stretch reads MAAGSRTSLLLAFGLLCLPWLQEGSA. 2 disulfide bridges follow: Cys-79/Cys-191 and Cys-208/Cys-215. Ser-132 carries the phosphoserine modification. An N-linked (GlcNAc...) asparagine glycan is attached at Asn-166. Ser-176 carries the phosphoserine modification.

Belongs to the somatotropin/prolactin family. Expressed in the placenta.

It localises to the secreted. Plays an important role in growth control. Its major role in stimulating body growth is to stimulate the liver and other tissues to secrete IGF1. It stimulates both the differentiation and proliferation of myoblasts. It also stimulates amino acid uptake and protein synthesis in muscle and other tissues. The polypeptide is Growth hormone variant (GH2) (Pan troglodytes (Chimpanzee)).